The following is a 283-amino-acid chain: Phosphatidylglycerol--prolipoprotein diacylglyceryl transferase (283 aa).

7 helical membrane-spanning segments follow: residues 21 to 41 (LAIR…LWLA), 60 to 80 (LLFA…VLFY), 95 to 115 (VWTG…AMLW), 124 to 144 (FFTI…AGRL), 176 to 196 (SQLY…NWFI), 203 to 223 (GAVS…VEYV), and 239 to 259 (MGQI…VWAF). Arginine 143 provides a ligand contact to a 1,2-diacyl-sn-glycero-3-phospho-(1'-sn-glycerol).

Belongs to the Lgt family.

It localises to the cell inner membrane. The enzyme catalyses L-cysteinyl-[prolipoprotein] + a 1,2-diacyl-sn-glycero-3-phospho-(1'-sn-glycerol) = an S-1,2-diacyl-sn-glyceryl-L-cysteinyl-[prolipoprotein] + sn-glycerol 1-phosphate + H(+). The protein operates within protein modification; lipoprotein biosynthesis (diacylglyceryl transfer). Functionally, catalyzes the transfer of the diacylglyceryl group from phosphatidylglycerol to the sulfhydryl group of the N-terminal cysteine of a prolipoprotein, the first step in the formation of mature lipoproteins. In Aliivibrio salmonicida (strain LFI1238) (Vibrio salmonicida (strain LFI1238)), this protein is Phosphatidylglycerol--prolipoprotein diacylglyceryl transferase.